Reading from the N-terminus, the 151-residue chain is Transcriptional repressor NrdR (151 aa).

The segment at 1-21 (MRCPFCGEADTQVKDSRPTED) is disordered. The segment at 3-34 (CPFCGEADTQVKDSRPTEDGAAIRRRRFCPQC) is a zinc-finger region. Residues 11-21 (TQVKDSRPTED) show a composition bias toward basic and acidic residues. Positions 49 to 139 (LVVVKADQRR…VYRDFREAKD (91 aa)) constitute an ATP-cone domain.

The protein belongs to the NrdR family. Zn(2+) serves as cofactor.

Negatively regulates transcription of bacterial ribonucleotide reductase nrd genes and operons by binding to NrdR-boxes. This is Transcriptional repressor NrdR from Acidiphilium cryptum (strain JF-5).